A 334-amino-acid polypeptide reads, in one-letter code: MKDNNSGKNSLFREENEEEVLVDPYGRKVTGLRISITDRCNLSCMYCHNEGAECCTCGPVGNEMSPELICSIIREAAKFGVRKVKFSGGEPLFRKDFEDILACLPPLKEVSATTNGILLEKRAKTLKAAGLDRINVSLDSLDPEKYRKITGAPPGTLEKVIRGINSAVEAGLTPVKLNMVLLKGINENEIDEMMDFIRPYKGKVILQLIELMNIDPELSKYTIDSKTLEKSLEERASEVRVRHLHHRKKYMIDGVEVEFVRPMDNSEFCAHCSRLRVTADGKLRPCLLVHDNLVDIGGANSPEEIEKLLRLAVSRRKPYYTPIMKIEKLKKKKE.

One can recognise a Radical SAM core domain in the interval 24–256; that stretch reads PYGRKVTGLR…RKKYMIDGVE (233 aa). Arginine 33 serves as a coordination point for GTP. [4Fe-4S] cluster contacts are provided by cysteine 40 and cysteine 44. Residue tyrosine 46 coordinates S-adenosyl-L-methionine. Residue cysteine 47 coordinates [4Fe-4S] cluster. Lysine 85 contributes to the GTP binding site. Glycine 89 contacts S-adenosyl-L-methionine. Threonine 113 serves as a coordination point for GTP. Serine 137 contributes to the S-adenosyl-L-methionine binding site. Lysine 176 contributes to the GTP binding site. [4Fe-4S] cluster is bound by residues cysteine 269 and cysteine 272. Residue 274-276 coordinates GTP; that stretch reads RLR. Position 286 (cysteine 286) interacts with [4Fe-4S] cluster.

Belongs to the radical SAM superfamily. MoaA family. Requires [4Fe-4S] cluster as cofactor.

The enzyme catalyses GTP + AH2 + S-adenosyl-L-methionine = (8S)-3',8-cyclo-7,8-dihydroguanosine 5'-triphosphate + 5'-deoxyadenosine + L-methionine + A + H(+). Its pathway is cofactor biosynthesis; molybdopterin biosynthesis. Catalyzes the cyclization of GTP to (8S)-3',8-cyclo-7,8-dihydroguanosine 5'-triphosphate. In Methanosarcina mazei (strain ATCC BAA-159 / DSM 3647 / Goe1 / Go1 / JCM 11833 / OCM 88) (Methanosarcina frisia), this protein is Probable GTP 3',8-cyclase.